The sequence spans 934 residues: Glycine dehydrogenase (decarboxylating) (934 aa).

Lys-687 is modified (N6-(pyridoxal phosphate)lysine).

It belongs to the GcvP family. In terms of assembly, the glycine cleavage system is composed of four proteins: P, T, L and H. Pyridoxal 5'-phosphate is required as a cofactor.

The catalysed reaction is N(6)-[(R)-lipoyl]-L-lysyl-[glycine-cleavage complex H protein] + glycine + H(+) = N(6)-[(R)-S(8)-aminomethyldihydrolipoyl]-L-lysyl-[glycine-cleavage complex H protein] + CO2. Functionally, the glycine cleavage system catalyzes the degradation of glycine. The P protein binds the alpha-amino group of glycine through its pyridoxal phosphate cofactor; CO(2) is released and the remaining methylamine moiety is then transferred to the lipoamide cofactor of the H protein. The chain is Glycine dehydrogenase (decarboxylating) from Nocardia farcinica (strain IFM 10152).